The primary structure comprises 414 residues: Particulate methane monooxygenase alpha subunit (414 aa).

A signal peptide spans 1–32 (MKTIKDRIAKWSAIGLLSAVAATAFYAPSASA). Cu cation is bound by residues H33, H48, H72, H137, and H139. Residues 33–172 (HGEKSQAAFM…MSEFRNPVTT (140 aa)) form a cupredoxin domain used to construct soluble pmoB (spmoB) region. 2 helical membrane passes run 186–206 (GNTYFWHAFWFAIGVAWIGYW) and 235–255 (VAMGFLAATILIVVMAMSSAN). A cupredoxin domain used to construct soluble pmoB (spmoB) region spans residues 265-414 (QAGTMRGMKP…IDAPLIPSFM (150 aa)).

As to quaternary structure, m.capsulatus has two forms of methane monooxygenase, a soluble (sMMO) and a membrane-bound (particulate) type (pMMO). The particulate type is a nonamer composed of three alpha:beta:gamma heterotrimeric protomers assembled into a cylindrical structure; the beta and gamma subunits comprise the bulk of the membrane-spanning regions and the soluble regions are derived primarily from alpha subunits which form two antiparallel beta-barrel-like structures each. This assembly, also called pMMO hydroxylase (pMMO-H), is proposed to associate with methanol dehydrogenase (MDH), also designated as pMMO-R, to form the pMMO-C complex which seems to have greater methane monooxygenase activity. It depends on Cu(2+) as a cofactor.

It localises to the membrane. The catalysed reaction is methane + a quinol + O2 = methanol + a quinone + H2O. Its function is as follows. Methane monooxygenase is responsible for the initial oxygenation of methane to methanol in methanotrophs. At least in vitro, specific quinols can replace NADH as reductants. This is Particulate methane monooxygenase alpha subunit (pmoB1) from Methylococcus capsulatus (strain ATCC 33009 / NCIMB 11132 / Bath).